A 456-amino-acid chain; its full sequence is tRNA modification GTPase MnmE (456 aa).

Residues R25, E82, and K121 each contribute to the (6S)-5-formyl-5,6,7,8-tetrahydrofolate site. One can recognise a TrmE-type G domain in the interval 217–379; that stretch reads GMKVVIAGRP…LKAHLKSVMG (163 aa). A K(+)-binding site is contributed by N227. GTP is bound by residues 227–232, 246–252, and 271–274; these read NAGKSS, TNIAGTT, and DTAG. Residue S231 coordinates Mg(2+). Residues T246, I248, and T251 each contribute to the K(+) site. A Mg(2+)-binding site is contributed by T252. K456 is a binding site for (6S)-5-formyl-5,6,7,8-tetrahydrofolate.

This sequence belongs to the TRAFAC class TrmE-Era-EngA-EngB-Septin-like GTPase superfamily. TrmE GTPase family. Homodimer. Heterotetramer of two MnmE and two MnmG subunits. K(+) is required as a cofactor.

It is found in the cytoplasm. Exhibits a very high intrinsic GTPase hydrolysis rate. Involved in the addition of a carboxymethylaminomethyl (cmnm) group at the wobble position (U34) of certain tRNAs, forming tRNA-cmnm(5)s(2)U34. The chain is tRNA modification GTPase MnmE from Saccharophagus degradans (strain 2-40 / ATCC 43961 / DSM 17024).